We begin with the raw amino-acid sequence, 272 residues long: Hydroxyethylthiazole kinase (272 aa).

A substrate-binding site is contributed by Met62. ATP is bound by residues Arg138 and Thr183. Gly210 contacts substrate.

Belongs to the Thz kinase family. Mg(2+) is required as a cofactor.

It carries out the reaction 5-(2-hydroxyethyl)-4-methylthiazole + ATP = 4-methyl-5-(2-phosphooxyethyl)-thiazole + ADP + H(+). The protein operates within cofactor biosynthesis; thiamine diphosphate biosynthesis; 4-methyl-5-(2-phosphoethyl)-thiazole from 5-(2-hydroxyethyl)-4-methylthiazole: step 1/1. Functionally, catalyzes the phosphorylation of the hydroxyl group of 4-methyl-5-beta-hydroxyethylthiazole (THZ). In Dichelobacter nodosus (strain VCS1703A), this protein is Hydroxyethylthiazole kinase.